The sequence spans 289 residues: 4-hydroxybenzoate octaprenyltransferase (289 aa).

The next 9 membrane-spanning stretches (helical) occupy residues 19-39 (IPIL…SHGL), 42-62 (ISYL…GCII), 85-105 (GQLS…VAFI), 107-127 (VLFL…LAIL), 134-154 (FFAI…FMAF), 165-185 (AWIF…IYAL), 211-231 (ILLF…YCDF), 233-253 (SFFY…YFLY), and 265-285 (FSAN…QYII).

It belongs to the UbiA prenyltransferase family. Mg(2+) serves as cofactor.

The protein resides in the cell inner membrane. The catalysed reaction is all-trans-octaprenyl diphosphate + 4-hydroxybenzoate = 4-hydroxy-3-(all-trans-octaprenyl)benzoate + diphosphate. It functions in the pathway cofactor biosynthesis; ubiquinone biosynthesis. Its function is as follows. Catalyzes the prenylation of para-hydroxybenzoate (PHB) with an all-trans polyprenyl group. Mediates the second step in the final reaction sequence of ubiquinone-8 (UQ-8) biosynthesis, which is the condensation of the polyisoprenoid side chain with PHB, generating the first membrane-bound Q intermediate 3-octaprenyl-4-hydroxybenzoate. The sequence is that of 4-hydroxybenzoate octaprenyltransferase from Francisella tularensis subsp. holarctica (strain FTNF002-00 / FTA).